A 221-amino-acid polypeptide reads, in one-letter code: Protein-L-isoaspartate O-methyltransferase (221 aa).

Residue Ser-68 is part of the active site.

Belongs to the methyltransferase superfamily. L-isoaspartyl/D-aspartyl protein methyltransferase family.

The protein resides in the cytoplasm. The catalysed reaction is [protein]-L-isoaspartate + S-adenosyl-L-methionine = [protein]-L-isoaspartate alpha-methyl ester + S-adenosyl-L-homocysteine. Catalyzes the methyl esterification of L-isoaspartyl residues in peptides and proteins that result from spontaneous decomposition of normal L-aspartyl and L-asparaginyl residues. It plays a role in the repair and/or degradation of damaged proteins. This is Protein-L-isoaspartate O-methyltransferase from Desulfosudis oleivorans (strain DSM 6200 / JCM 39069 / Hxd3) (Desulfococcus oleovorans).